The sequence spans 151 residues: Proteolipid protein 2 (151 aa).

The MARVEL domain maps to 19–137 (FSRTKKGILL…DAYITFPLKQ (119 aa)). Helical transmembrane passes span 25–45 (GILLFAEIILCLVILICFSAS), 48–68 (AYSSLSVIEMIFAAVLFVFYM), 85–105 (FFRSLIAAILYLITSIVVLVE), and 112–132 (IVAGVLGLLATLLFGYDAYIT).

Its subcellular location is the membrane. In terms of biological role, may play a role in cell differentiation in the intestinal epithelium. The protein is Proteolipid protein 2 (Plp2) of Rattus norvegicus (Rat).